Reading from the N-terminus, the 440-residue chain is Thymidine phosphorylase (440 aa).

Belongs to the thymidine/pyrimidine-nucleoside phosphorylase family. As to quaternary structure, homodimer.

It catalyses the reaction thymidine + phosphate = 2-deoxy-alpha-D-ribose 1-phosphate + thymine. It functions in the pathway pyrimidine metabolism; dTMP biosynthesis via salvage pathway; dTMP from thymine: step 1/2. Functionally, the enzymes which catalyze the reversible phosphorolysis of pyrimidine nucleosides are involved in the degradation of these compounds and in their utilization as carbon and energy sources, or in the rescue of pyrimidine bases for nucleotide synthesis. In Shigella flexneri serotype 5b (strain 8401), this protein is Thymidine phosphorylase.